The chain runs to 377 residues: Lactosylceramide 1,3-N-acetyl-beta-D-glucosaminyltransferase (377 aa).

At 1–12 (MLISARRLRRCQ) the chain is on the cytoplasmic side. The chain crosses the membrane as a helical; Signal-anchor for type II membrane protein span at residues 13–30 (FFQLLTSCFVLSLMALLV). At 31-377 (QEDNSLINHV…DTYPCSAAWS (347 aa)) the chain is on the lumenal side. N-linked (GlcNAc...) asparagine glycans are attached at residues Asn56, Asn167, and Asn275.

Belongs to the glycosyltransferase 31 family.

The protein localises to the golgi apparatus membrane. It catalyses the reaction a beta-D-Gal-(1-&gt;4)-beta-D-Glc-(1&lt;-&gt;1)-Cer(d18:1(4E)) + UDP-N-acetyl-alpha-D-glucosamine = a beta-D-GlcNAc-(1-&gt;3)-beta-D-Gal-(1-&gt;4)-beta-D-Glc-(1&lt;-&gt;1)-Cer(d18:1(4E)) + UDP + H(+). The catalysed reaction is a neolactoside nLc4Cer(d18:1(4E)) + UDP-N-acetyl-alpha-D-glucosamine = a neolactoside IV(3)-beta-GlcNAc-nLc4Cer(d18:1(4E)) + UDP + H(+). It functions in the pathway protein modification; protein glycosylation. Beta-1,3-N-acetylglucosaminyltransferase that plays a key role in the synthesis of lacto- or neolacto-series carbohydrate chains on glycolipids. In Xenopus tropicalis (Western clawed frog), this protein is Lactosylceramide 1,3-N-acetyl-beta-D-glucosaminyltransferase (b3gnt5).